The following is an 87-amino-acid chain: uncharacterized protein (87 aa).

The chain crosses the membrane as a helical span at residues 42–62 (LADALYSAGSAAFTIAASLVA).

Belongs to the SPP1 holin family.

The protein localises to the membrane. This is an uncharacterized protein from Bacillus licheniformis.